A 153-amino-acid chain; its full sequence is Gamma-glutamylaminecyclotransferase (153 aa).

Residue 7–10 coordinates substrate; that stretch reads YGTL. The Proton acceptor role is filled by glutamate 82. Residues 130-153 are disordered; the sequence is QLPHHDSYDSEGPHGLRYNPRENR. Over residues 132–153 the composition is skewed to basic and acidic residues; the sequence is PHHDSYDSEGPHGLRYNPRENR.

The protein belongs to the gamma-glutamylcyclotransferase family. Monomer.

The enzyme catalyses epsilon-(gamma-L-glutamyl)-L-lysine = 5-oxo-L-proline + L-lysine. Functionally, contributes to degradation of proteins cross-linked by transglutaminases by degrading the cross-link between a lysine and a glutamic acid residue. Catalyzes the formation of 5-oxo-L-proline from L-gamma-glutamyl-L-epsilon-lysine. Inactive with L-gamma-glutamyl-alpha-amino acid substrates such as L-gamma-glutamyl-L-alpha-cysteine and L-gamma-glutamyl-L-alpha-alanine. The polypeptide is Gamma-glutamylaminecyclotransferase (GGACT) (Homo sapiens (Human)).